Here is a 568-residue protein sequence, read N- to C-terminus: Urease subunit alpha (568 aa).

One can recognise a Urease domain in the interval 130-568 (GGIDTHIHFI…LPMAQRYFLF (439 aa)). Residues His135, His137, and Lys218 each coordinate Ni(2+). An N6-carboxylysine modification is found at Lys218. His220 serves as a coordination point for substrate. 2 residues coordinate Ni(2+): His247 and His273. The Proton donor role is filled by His321. Asp361 contacts Ni(2+).

It belongs to the metallo-dependent hydrolases superfamily. Urease alpha subunit family. Heterotrimer of UreA (gamma), UreB (beta) and UreC (alpha) subunits. Three heterotrimers associate to form the active enzyme. Ni cation is required as a cofactor. Post-translationally, carboxylation allows a single lysine to coordinate two nickel ions.

The protein resides in the cytoplasm. The enzyme catalyses urea + 2 H2O + H(+) = hydrogencarbonate + 2 NH4(+). It participates in nitrogen metabolism; urea degradation; CO(2) and NH(3) from urea (urease route): step 1/1. The polypeptide is Urease subunit alpha (Burkholderia pseudomallei (strain K96243)).